Here is a 156-residue protein sequence, read N- to C-terminus: Snaclec A1 (156 aa).

A signal peptide spans Met-1–Ala-23. Disulfide bonds link Cys-27–Cys-38, Cys-55–Cys-154, and Cys-129–Cys-146. Residues His-34 to Glu-155 form the C-type lectin domain.

Belongs to the snaclec family. Heterodimer; disulfide-linked. Expressed by the venom gland.

It is found in the secreted. Its function is as follows. Interferes with one step of hemostasis (modulation of platelet aggregation, or coagulation cascade, for example). In Macrovipera lebetinus (Levantine viper), this protein is Snaclec A1.